The primary structure comprises 249 residues: 5'-nucleotidase SurE (249 aa).

4 residues coordinate a divalent metal cation: aspartate 8, aspartate 9, serine 39, and asparagine 91.

It belongs to the SurE nucleotidase family. Requires a divalent metal cation as cofactor.

The protein localises to the cytoplasm. The catalysed reaction is a ribonucleoside 5'-phosphate + H2O = a ribonucleoside + phosphate. In terms of biological role, nucleotidase that shows phosphatase activity on nucleoside 5'-monophosphates. In Stutzerimonas stutzeri (strain A1501) (Pseudomonas stutzeri), this protein is 5'-nucleotidase SurE.